An 881-amino-acid polypeptide reads, in one-letter code: Alanine--tRNA ligase (881 aa).

H565, H569, C672, and H676 together coordinate Zn(2+).

This sequence belongs to the class-II aminoacyl-tRNA synthetase family. Requires Zn(2+) as cofactor.

The protein localises to the cytoplasm. The enzyme catalyses tRNA(Ala) + L-alanine + ATP = L-alanyl-tRNA(Ala) + AMP + diphosphate. Functionally, catalyzes the attachment of alanine to tRNA(Ala) in a two-step reaction: alanine is first activated by ATP to form Ala-AMP and then transferred to the acceptor end of tRNA(Ala). Also edits incorrectly charged Ser-tRNA(Ala) and Gly-tRNA(Ala) via its editing domain. This Novosphingobium aromaticivorans (strain ATCC 700278 / DSM 12444 / CCUG 56034 / CIP 105152 / NBRC 16084 / F199) protein is Alanine--tRNA ligase.